The following is a 670-amino-acid chain: UvrABC system protein B (670 aa).

One can recognise a Helicase ATP-binding domain in the interval 26–414 (EGLEDGLAHQ…GGDVIDQVVR (389 aa)). 39–46 (GVTGSGKT) lines the ATP pocket. Residues 92-115 (YYDYYQPEAYVPSSDTFIEKDASV) carry the Beta-hairpin motif. The 167-residue stretch at 431–597 (QVDDLLSEIR…GINKKISDIL (167 aa)) folds into the Helicase C-terminal domain. A UVR domain is found at 630–665 (ELKIRELESKMLTHAQNLEFEEAAALRDEVQVLRAQ).

This sequence belongs to the UvrB family. In terms of assembly, forms a heterotetramer with UvrA during the search for lesions. Interacts with UvrC in an incision complex.

Its subcellular location is the cytoplasm. Functionally, the UvrABC repair system catalyzes the recognition and processing of DNA lesions. A damage recognition complex composed of 2 UvrA and 2 UvrB subunits scans DNA for abnormalities. Upon binding of the UvrA(2)B(2) complex to a putative damaged site, the DNA wraps around one UvrB monomer. DNA wrap is dependent on ATP binding by UvrB and probably causes local melting of the DNA helix, facilitating insertion of UvrB beta-hairpin between the DNA strands. Then UvrB probes one DNA strand for the presence of a lesion. If a lesion is found the UvrA subunits dissociate and the UvrB-DNA preincision complex is formed. This complex is subsequently bound by UvrC and the second UvrB is released. If no lesion is found, the DNA wraps around the other UvrB subunit that will check the other stand for damage. This chain is UvrABC system protein B, found in Pectobacterium atrosepticum (strain SCRI 1043 / ATCC BAA-672) (Erwinia carotovora subsp. atroseptica).